Reading from the N-terminus, the 436-residue chain is Trigger factor (436 aa).

Positions 163–248 (GDTVVIDFDG…IHEVKEKQLP (86 aa)) constitute a PPIase FKBP-type domain.

The protein belongs to the FKBP-type PPIase family. Tig subfamily.

Its subcellular location is the cytoplasm. It carries out the reaction [protein]-peptidylproline (omega=180) = [protein]-peptidylproline (omega=0). In terms of biological role, involved in protein export. Acts as a chaperone by maintaining the newly synthesized protein in an open conformation. Functions as a peptidyl-prolyl cis-trans isomerase. This Levilactobacillus brevis (strain ATCC 367 / BCRC 12310 / CIP 105137 / JCM 1170 / LMG 11437 / NCIMB 947 / NCTC 947) (Lactobacillus brevis) protein is Trigger factor.